The chain runs to 592 residues: MNIYRTHVCNELGVAHVGNEVALSGWVYRKRDHGGLLFVDLRDFYGITQLIFNESENPELFNRMATIGLESVITVRGIVAERSEDNVNASIETGHVEVKVSTLTVVSEAAPLPLHVPTSFSYPEDIRLQHRFLDLRCDKVKNSILLRSMVVSELRRAMEALGFIEVHTPILTSSSPEGARDYIVPSRTHAGKFYALPQAPQIFKQLLMVGGFDKYFQIAPCFRDEDSRADRSPGEFYQLDMEMSFVTQEDVFAAIEPVLYGLFAKFAGADKKVDRQFPRITYRDSMIRYGSDKPDLRNPLVISDVTEIFRNSGFRTFQAGVEAGEVVRAIPAPNTSGKPRSFFDDKIERAKEFGARGLGYVTYEADGTAKGPIAKFLSEDELARIRSAAGVGNGDSVFFMSDTADKAADFAGKIRELLGLELGLIEHDTFKFCWIVDFPYFKCEDGELDFCHNPFSMPQGEMEALEQQNPLDIIAYQYDIVCNGIEISSGAIRNHRLDVMYKAFSMVGYDEQTVNSKFGALVRAFKFGAPPHGGLAPGIDRIVMLLADAPNIREVICFPLNQTGEDLLMGAPSEVSPAHLQELSIALNIKRK.

Glutamate 177 serves as a coordination point for L-aspartate. Residues 201 to 204 (QIFK) form an aspartate region. L-aspartate is bound by residues arginine 223 and histidine 452. 223-225 (RDE) contributes to the ATP binding site. Glutamate 486 is a binding site for ATP. Arginine 493 is an L-aspartate binding site. 538–541 (GIDR) lines the ATP pocket.

It belongs to the class-II aminoacyl-tRNA synthetase family. Type 1 subfamily. Homodimer.

The protein resides in the cytoplasm. The catalysed reaction is tRNA(Asx) + L-aspartate + ATP = L-aspartyl-tRNA(Asx) + AMP + diphosphate. In terms of biological role, aspartyl-tRNA synthetase with relaxed tRNA specificity since it is able to aspartylate not only its cognate tRNA(Asp) but also tRNA(Asn). Reaction proceeds in two steps: L-aspartate is first activated by ATP to form Asp-AMP and then transferred to the acceptor end of tRNA(Asp/Asn). This is Aspartate--tRNA(Asp/Asn) ligase from Anaplasma marginale (strain Florida).